We begin with the raw amino-acid sequence, 412 residues long: Squamosa promoter-binding-like protein 2 (412 aa).

A disordered region spans residues 1-81 (MDWDAKMPSW…AAAAGKRARA (81 aa)). Gly residues predominate over residues 18–31 (PSGGGGGGGGGGGA). Composition is skewed to low complexity over residues 48–57 (VSAASAAPAA) and 67–81 (SSSSSAAAAGKRARA). The segment at 89 to 167 (VPACSVEGCA…DGHNKRRRKP (79 aa)) adopts an SBP-type zinc-finger fold. The Zn(2+) site is built by cysteine 92, cysteine 97, cysteine 115, histidine 118, cysteine 134, cysteine 137, histidine 141, and cysteine 153. The Bipartite nuclear localization signal signature appears at 150–166 (KRSCRKRLDGHNKRRRK).

In terms of tissue distribution, expressed in stems, leaf sheaths, and young panicles.

The protein resides in the nucleus. In terms of biological role, trans-acting factor that binds specifically to the consensus nucleotide sequence 5'-TNCGTACAA-3'. May be involved in panicle development. In Oryza sativa subsp. japonica (Rice), this protein is Squamosa promoter-binding-like protein 2 (SPL2).